Consider the following 514-residue polypeptide: Embryonic protein UVS.2 (514 aa).

The first 19 residues, M1–S19, serve as a signal peptide directing secretion. In terms of domain architecture, Peptidase M12A spans S90 to N286. A glycan (N-linked (GlcNAc...) asparagine) is linked at N112. 6 cysteine pairs are disulfide-bonded: C137-C285, C158-C178, C288-C314, C340-C363, C402-C428, and C455-C475. A Zn(2+)-binding site is contributed by H186. E187 is an active-site residue. Zn(2+) contacts are provided by H190 and H196. The N-linked (GlcNAc...) asparagine glycan is linked to N199. CUB domains are found at residues C288–I400 and C402–V513. N-linked (GlcNAc...) asparagine glycosylation is found at N421, N427, and N464.

Requires Zn(2+) as cofactor.

This Xenopus laevis (African clawed frog) protein is Embryonic protein UVS.2.